The following is a 122-amino-acid chain: NADH-quinone oxidoreductase subunit A (122 aa).

3 helical membrane-spanning segments follow: residues 10 to 30, 66 to 86, and 91 to 111; these read MIVL…LTLG, IFAL…PWAV, and LGLF…VGLA.

This sequence belongs to the complex I subunit 3 family. As to quaternary structure, NDH-1 is composed of 14 different subunits. Subunits NuoA, H, J, K, L, M, N constitute the membrane sector of the complex.

The protein resides in the cell membrane. The catalysed reaction is a quinone + NADH + 5 H(+)(in) = a quinol + NAD(+) + 4 H(+)(out). In terms of biological role, NDH-1 shuttles electrons from NADH, via FMN and iron-sulfur (Fe-S) centers, to quinones in the respiratory chain. The immediate electron acceptor for the enzyme in this species is believed to be a menaquinone. Couples the redox reaction to proton translocation (for every two electrons transferred, four hydrogen ions are translocated across the cytoplasmic membrane), and thus conserves the redox energy in a proton gradient. The sequence is that of NADH-quinone oxidoreductase subunit A from Bacillus anthracis.